A 179-amino-acid polypeptide reads, in one-letter code: Translation initiation factor IF-3 (179 aa).

This sequence belongs to the IF-3 family. As to quaternary structure, monomer.

It localises to the cytoplasm. In terms of biological role, IF-3 binds to the 30S ribosomal subunit and shifts the equilibrium between 70S ribosomes and their 50S and 30S subunits in favor of the free subunits, thus enhancing the availability of 30S subunits on which protein synthesis initiation begins. The sequence is that of Translation initiation factor IF-3 from Buchnera aphidicola subsp. Schizaphis graminum (strain Sg).